The following is a 338-amino-acid chain: Probable protein S-acyltransferase 1 (338 aa).

2 consecutive transmembrane segments (helical) span residues 32-52 (DASS…AFSI) and 68-88 (LTLI…FLTS). A DHHC domain is found at 142–192 (KFCDTCQLYRPPRAFHCSICNNCVQRFDHHCPWVGQCIALRNYPFFVCFLS). Residue C172 is the S-palmitoyl cysteine intermediate of the active site. Transmembrane regions (helical) follow at residues 186–206 (FFVC…VFSW) and 225–245 (ILGV…GLTV). The segment at 319–338 (FGPKDTKMSSGKSDSEARER) is disordered. The span at 320–338 (GPKDTKMSSGKSDSEARER) shows a compositional bias: basic and acidic residues.

Belongs to the DHHC palmitoyltransferase family.

It localises to the endosome membrane. The catalysed reaction is L-cysteinyl-[protein] + hexadecanoyl-CoA = S-hexadecanoyl-L-cysteinyl-[protein] + CoA. Palmitoyl acyltransferase. The protein is Probable protein S-acyltransferase 1 (PAT01) of Arabidopsis thaliana (Mouse-ear cress).